Consider the following 545-residue polypeptide: Thermosome subunit beta (545 aa).

This sequence belongs to the TCP-1 chaperonin family. Forms a Heterooligomeric complex of two stacked eight-membered rings.

Functionally, molecular chaperone; binds unfolded polypeptides in vitro, and has a weak ATPase activity. The chain is Thermosome subunit beta (thsB) from Archaeoglobus fulgidus (strain ATCC 49558 / DSM 4304 / JCM 9628 / NBRC 100126 / VC-16).